The following is a 677-amino-acid chain: MAKPRGRKLLKKQQKDQFEPSNDVEKFEDDRDHQENVYQGDAADSEKSSDPQMFFGVLDREELEYFKQIESTLAMDTFESSEEKSQMVTNVLQEAKGKELKLVTSQICSKLMERIILECDDMQLKSVFKAFNGFFYNLSCHKYASHVLETLFVRSAALLEKELLTPTFDNETSNEDGEVFGTMENMFLFMLNELKPHLKSMVSHQYASHSLRLLILILSSKMLPSSTKNNSTLRSKKSKIARKMIDIKDNDDFNKVYQTPESFKLELREMLTSLYKQYTHNADSRSDISPTDITKFRELCVDKVASPVIQLIIQIEGIFDRDRAYWRLVFNTNDEKDPKEEAFVEYLLSDSVGSHFLENVIASARLKYVERLYHLYMKDRIVKLAKRDTTGAFVVQAFLKHMKEKDVKQILDDIIPELSILLNSNMDFGTSIINASNRLGCYLKDEVVNQLIKKYYPEESENKNILESCLLLSSSTLGNTRDDWPTADERRRSIFLEQLVNYDDQFLTITIDSMLNLPEERFLQMCYHGVFSHVVESVLQTKRVDTIKRRLLLNVLSKDIVNMSCNAYGSHIADKLWEFTAKLTVYKERIAQALVDETEKVKNSTYGRQVWKNWSLELYVRKRWDWKKLIKEQEHELFPNAVKPQPKNQQFKNNGNDNKRSSDSNYSSSSNFKKQRR.

The segment covering 1–12 has biased composition (basic residues); the sequence is MAKPRGRKLLKK. The interval 1 to 50 is disordered; it reads MAKPRGRKLLKKQQKDQFEPSNDVEKFEDDRDHQENVYQGDAADSEKSSD. The segment covering 13–35 has biased composition (basic and acidic residues); it reads QQKDQFEPSNDVEKFEDDRDHQE. Pumilio repeat units follow at residues 94–129, 130–165, 193–228, 287–331, 339–374, 375–412, 516–553, and 554–592; these read EAKGKELKLVTSQICSKLMERIILECDDMQLKSVFK, AFNGFFYNLSCHKYASHVLETLFVRSAALLEKELLT, ELKPHLKSMVSHQYASHSLRLLILILSSKMLPSSTK, DISP…LVFN, KEEAFVEYLLSDSVGSHFLENVIASARLKYVERLYH, LYMKDRIVKLAKRDTTGAFVVQAFLKHMKEKDVKQILD, NLPEERFLQMCYHGVFSHVVESVLQTKRVDTIKRRLLL, and NVLSKDIVNMSCNAYGSHIADKLWEFTAKLTVYKERIAQ. The segment at 639–677 is disordered; that stretch reads PNAVKPQPKNQQFKNNGNDNKRSSDSNYSSSSNFKKQRR. Positions 646–655 are enriched in polar residues; that stretch reads PKNQQFKNNG.

This sequence belongs to the NOP9 family.

Its subcellular location is the nucleus. The protein resides in the nucleolus. Functionally, RNA-binding nucleolar protein required for pre-rRNA processing. Involved in production of 18S rRNA and assembly of small ribosomal subunit. This chain is Nucleolar protein 9 (NOP9), found in Vanderwaltozyma polyspora (strain ATCC 22028 / DSM 70294 / BCRC 21397 / CBS 2163 / NBRC 10782 / NRRL Y-8283 / UCD 57-17) (Kluyveromyces polysporus).